The following is a 195-amino-acid chain: 3-isopropylmalate dehydratase small subunit (195 aa).

Belongs to the LeuD family. LeuD type 1 subfamily. In terms of assembly, heterodimer of LeuC and LeuD.

It carries out the reaction (2R,3S)-3-isopropylmalate = (2S)-2-isopropylmalate. It participates in amino-acid biosynthesis; L-leucine biosynthesis; L-leucine from 3-methyl-2-oxobutanoate: step 2/4. Catalyzes the isomerization between 2-isopropylmalate and 3-isopropylmalate, via the formation of 2-isopropylmaleate. The sequence is that of 3-isopropylmalate dehydratase small subunit from Frankia casuarinae (strain DSM 45818 / CECT 9043 / HFP020203 / CcI3).